The sequence spans 276 residues: Phosphatidylglycerol--prolipoprotein diacylglyceryl transferase (276 aa).

Helical transmembrane passes span 17-37 (LAIR…LWFG), 59-79 (MLFF…VLFY), 95-115 (WEGG…MWLF), 129-149 (FIAP…FING), 176-196 (SQLY…WLFA), 202-222 (MGAV…AAEF), and 237-257 (LSMG…MVVW). Arg142 serves as a coordination point for a 1,2-diacyl-sn-glycero-3-phospho-(1'-sn-glycerol).

Belongs to the Lgt family.

It is found in the cell inner membrane. It carries out the reaction L-cysteinyl-[prolipoprotein] + a 1,2-diacyl-sn-glycero-3-phospho-(1'-sn-glycerol) = an S-1,2-diacyl-sn-glyceryl-L-cysteinyl-[prolipoprotein] + sn-glycerol 1-phosphate + H(+). Its pathway is protein modification; lipoprotein biosynthesis (diacylglyceryl transfer). In terms of biological role, catalyzes the transfer of the diacylglyceryl group from phosphatidylglycerol to the sulfhydryl group of the N-terminal cysteine of a prolipoprotein, the first step in the formation of mature lipoproteins. The protein is Phosphatidylglycerol--prolipoprotein diacylglyceryl transferase of Cupriavidus pinatubonensis (strain JMP 134 / LMG 1197) (Cupriavidus necator (strain JMP 134)).